Reading from the N-terminus, the 429-residue chain is GTPase Obg (429 aa).

The Obg domain occupies 1–158 (MLIDKCTLFL…IEAQFELKYI (158 aa)). Residues 159 to 330 (ADVGLLGLPN…LLKDIFKDYK (172 aa)) form the OBG-type G domain. GTP-binding positions include 165-172 (GLPNAGKS), 190-194 (FTTLS), 211-214 (DIPG), 281-284 (NKID), and 311-313 (SGF). Residues S172 and T192 each coordinate Mg(2+). Residues 351-429 (KVEKEQEDIV…RIQDVMFEIN (79 aa)) enclose the OCT domain.

Belongs to the TRAFAC class OBG-HflX-like GTPase superfamily. OBG GTPase family. Monomer. It depends on Mg(2+) as a cofactor.

It is found in the cytoplasm. In terms of biological role, an essential GTPase which binds GTP, GDP and possibly (p)ppGpp with moderate affinity, with high nucleotide exchange rates and a fairly low GTP hydrolysis rate. Plays a role in control of the cell cycle, stress response, ribosome biogenesis and in those bacteria that undergo differentiation, in morphogenesis control. The protein is GTPase Obg of Malacoplasma penetrans (strain HF-2) (Mycoplasma penetrans).